We begin with the raw amino-acid sequence, 398 residues long: Phosphoglycerate kinase (398 aa).

Substrate contacts are provided by residues 21-23, R36, 59-62, R119, and R157; these read DFN and HLGR. ATP-binding positions include K208, G296, E327, and 354 to 357; that span reads GGDS.

It belongs to the phosphoglycerate kinase family. In terms of assembly, monomer.

It localises to the cytoplasm. It carries out the reaction (2R)-3-phosphoglycerate + ATP = (2R)-3-phospho-glyceroyl phosphate + ADP. Its pathway is carbohydrate degradation; glycolysis; pyruvate from D-glyceraldehyde 3-phosphate: step 2/5. The protein is Phosphoglycerate kinase of Streptococcus pyogenes serotype M3 (strain ATCC BAA-595 / MGAS315).